We begin with the raw amino-acid sequence, 190 residues long: Large ribosomal subunit protein uL5 (190 aa).

Belongs to the universal ribosomal protein uL5 family. In terms of assembly, part of the 50S ribosomal subunit; part of the 5S rRNA/L5/L18/L25 subcomplex. Contacts the 5S rRNA and the P site tRNA. Forms a bridge to the 30S subunit in the 70S ribosome.

This is one of the proteins that bind and probably mediate the attachment of the 5S RNA into the large ribosomal subunit, where it forms part of the central protuberance. In the 70S ribosome it contacts protein S13 of the 30S subunit (bridge B1b), connecting the 2 subunits; this bridge is implicated in subunit movement. Contacts the P site tRNA; the 5S rRNA and some of its associated proteins might help stabilize positioning of ribosome-bound tRNAs. The sequence is that of Large ribosomal subunit protein uL5 from Bifidobacterium adolescentis (strain ATCC 15703 / DSM 20083 / NCTC 11814 / E194a).